The primary structure comprises 236 residues: Small ribosomal subunit protein uS2c (236 aa).

This sequence belongs to the universal ribosomal protein uS2 family.

The protein localises to the plastid. It is found in the chloroplast. This chain is Small ribosomal subunit protein uS2c (rps2), found in Oryza sativa (Rice).